The following is a 423-amino-acid chain: MAAESDVLHFQFEQQGDVVLQKMNLLRQQNLFCDVSIYINDTEFQGHKVILAACSTFMRDQFLLTQSKHVRITILQSAEVGWKLLLSCYTGALEVKRKELLKYLTAASYLQMVHIVEKCTEALSKYLEIDLSMKNNQHTDLCQSSDTDVKNEEENSDKDCEIIEISEDSPVNLDFHVKEEESNALQSAAETLTSERMRMQSPELSAVDGGFKENEICILHVESISTDDVENGQFSQPCTSSKAGIYFPETQHSLINSTVENRVTEVPGNTNQGLFSENSDGSHGTVNEIQNLDENFSLRHQCPRCPRGFLHVENYLRHLKMHKLFLCLQCGKTFTQKKNLNRHIRGHMGIRPFQCTVCLKTFTAKSTLQDHLNIHSGDRPYKCHCCDMDFKHKSALKKHLTSVHGRSSGEKLSRPDLKRQNLL.

A BTB domain is found at Cys33–Arg97. Residue Ser201 is modified to Phosphoserine. 4 C2H2-type zinc fingers span residues His300–His322, Phe325–His347, Phe353–His375, and Tyr381–His404.

The protein localises to the nucleus. May be involved in transcriptional regulation. The chain is Zinc finger and BTB domain-containing protein 6 (Zbtb6) from Mus musculus (Mouse).